Reading from the N-terminus, the 463-residue chain is Maintenance of mitochondrial morphology protein 1-2 (463 aa).

Residues Met-1 to Gly-23 are Lumenal-facing. A helical transmembrane segment spans residues Leu-24 to Phe-44. Over Ala-45–Ser-463 the chain is Cytoplasmic. Residues Gly-72–Val-152 form a disordered region. The segment covering Arg-108–Gly-122 has biased composition (polar residues). In terms of domain architecture, SMP-LTD spans Ala-205–Pro-435.

It belongs to the MMM1 family. Homodimer. Component of the ER-mitochondria encounter structure (ERMES) or MDM complex, composed of MMM1, MDM10, MDM12 and MDM34. An MMM1 homodimer associates with one molecule of MDM12 on each side in a pairwise head-to-tail manner, and the SMP-LTD domains of MMM1 and MDM12 generate a continuous hydrophobic tunnel for phospholipid trafficking.

The protein localises to the endoplasmic reticulum membrane. Functionally, component of the ERMES/MDM complex, which serves as a molecular tether to connect the endoplasmic reticulum (ER) and mitochondria. Components of this complex are involved in the control of mitochondrial shape and protein biogenesis, and function in nonvesicular lipid trafficking between the ER and mitochondria. The MDM12-MMM1 subcomplex functions in the major beta-barrel assembly pathway that is responsible for biogenesis of all outer membrane beta-barrel proteins, and acts in a late step after the SAM complex. The MDM10-MDM12-MMM1 subcomplex further acts in the TOM40-specific pathway after the action of the MDM12-MMM1 complex. Essential for establishing and maintaining the structure of mitochondria and maintenance of mtDNA nucleoids. This Yarrowia lipolytica (strain CLIB 122 / E 150) (Yeast) protein is Maintenance of mitochondrial morphology protein 1-2.